Here is a 173-residue protein sequence, read N- to C-terminus: Shikimate kinase (173 aa).

14–19 is an ATP binding site; it reads GAGKST. Mg(2+) is bound at residue serine 18. Positions 36, 60, and 82 each coordinate substrate. Arginine 120 lines the ATP pocket. Arginine 140 provides a ligand contact to substrate. Glutamine 157 serves as a coordination point for ATP.

This sequence belongs to the shikimate kinase family. As to quaternary structure, monomer. Requires Mg(2+) as cofactor.

The protein resides in the cytoplasm. It catalyses the reaction shikimate + ATP = 3-phosphoshikimate + ADP + H(+). The protein operates within metabolic intermediate biosynthesis; chorismate biosynthesis; chorismate from D-erythrose 4-phosphate and phosphoenolpyruvate: step 5/7. Functionally, catalyzes the specific phosphorylation of the 3-hydroxyl group of shikimic acid using ATP as a cosubstrate. The polypeptide is Shikimate kinase (Buchnera aphidicola subsp. Schizaphis graminum (strain Sg)).